The primary structure comprises 487 residues: Keratin, type I cytoskeletal 12 (487 aa).

The tract at residues 1–118 is head; the sequence is MSLSVCTSAL…GNDGGLLSGS (118 aa). Positions 119–154 are coil 1A; sequence EKETMQNLNDRLASYLGKVRSLEEANAELENKIREW. The region spanning 119–433 is the IF rod domain; it reads EKETMQNLND…RLLEGDSQGD (315 aa). A linker 1 region spans residues 158-175; it reads RRTRDAGSQSDYSKYYPL. The segment at 176 to 267 is coil 1B; sequence IEDLKNKIVS…KNHEEELQSF (92 aa). The linker 12 stretch occupies residues 268-290; it reads QAGGPGEVNVEMDAAPGVDLTKV. The interval 291 to 428 is coil 2; sequence LNEMRAQYEA…IETYRRLLEG (138 aa). The interval 428 to 461 is disordered; that stretch reads GDSQGDGFDESSSLSVSKPQTPSVDSSKDPNKTR. The tract at residues 429 to 487 is tail; that stretch reads DSQGDGFDESSSLSVSKPQTPSVDSSKDPNKTRKIKTVVQEIVNGEVVSSQVQELEEEM. The segment covering 437-452 has biased composition (polar residues); that stretch reads ESSSLSVSKPQTPSVD.

The protein belongs to the intermediate filament family. Heterotetramer of two type I and two type II keratins. Keratin-3 associates with keratin-12. Expressed in the corneal epithelium (at protein level). Also expressed in the suprabasal limbal epithelium of the cornea (at protein level).

Involved in corneal epithelium organization, integrity and corneal keratin expression. In Mus musculus (Mouse), this protein is Keratin, type I cytoskeletal 12 (Krt12).